Reading from the N-terminus, the 387-residue chain is Formate-dependent phosphoribosylglycinamide formyltransferase (387 aa).

N(1)-(5-phospho-beta-D-ribosyl)glycinamide-binding positions include 15-16 and glutamate 75; that span reads EL. ATP-binding positions include arginine 106, lysine 147, 152–157, 187–190, and glutamate 195; these read SSGKGQ and EEFI. An ATP-grasp domain is found at 111-301; that stretch reads DLASNELNIR…EFELHLRAVL (191 aa). Mg(2+) contacts are provided by glutamate 260 and glutamate 272. N(1)-(5-phospho-beta-D-ribosyl)glycinamide is bound by residues aspartate 279, lysine 349, and 356–357; that span reads RR.

Belongs to the PurK/PurT family. As to quaternary structure, homodimer.

It carries out the reaction N(1)-(5-phospho-beta-D-ribosyl)glycinamide + formate + ATP = N(2)-formyl-N(1)-(5-phospho-beta-D-ribosyl)glycinamide + ADP + phosphate + H(+). It participates in purine metabolism; IMP biosynthesis via de novo pathway; N(2)-formyl-N(1)-(5-phospho-D-ribosyl)glycinamide from N(1)-(5-phospho-D-ribosyl)glycinamide (formate route): step 1/1. Its function is as follows. Involved in the de novo purine biosynthesis. Catalyzes the transfer of formate to 5-phospho-ribosyl-glycinamide (GAR), producing 5-phospho-ribosyl-N-formylglycinamide (FGAR). Formate is provided by PurU via hydrolysis of 10-formyl-tetrahydrofolate. In Prochlorococcus marinus (strain NATL1A), this protein is Formate-dependent phosphoribosylglycinamide formyltransferase.